We begin with the raw amino-acid sequence, 308 residues long: Ribosomal RNA large subunit methyltransferase F (308 aa).

Belongs to the methyltransferase superfamily. METTL16/RlmF family.

Its subcellular location is the cytoplasm. The enzyme catalyses adenosine(1618) in 23S rRNA + S-adenosyl-L-methionine = N(6)-methyladenosine(1618) in 23S rRNA + S-adenosyl-L-homocysteine + H(+). Specifically methylates the adenine in position 1618 of 23S rRNA. The protein is Ribosomal RNA large subunit methyltransferase F of Escherichia coli O6:H1 (strain CFT073 / ATCC 700928 / UPEC).